We begin with the raw amino-acid sequence, 215 residues long: Deoxyadenosine kinase (215 aa).

9-17 contacts ATP; the sequence is GPIGAGKSS. 3 residues coordinate substrate: E33, Y45, and N56. The active-site Proton acceptor is the D79. Residues R80, D85, and E150 each coordinate substrate.

This sequence belongs to the DCK/DGK family. Heterodimer of a deoxyadenosine (DAK) and a deoxyguanosine kinase (DGK).

The catalysed reaction is 2'-deoxyadenosine + ATP = dAMP + ADP + H(+). DGK/DAK plays an essential role in generating the deoxyribonucleotide precursors, dGTP and dATP, for DNA metabolism. This Lactobacillus acidophilus (strain ATCC 700396 / NCK56 / N2 / NCFM) protein is Deoxyadenosine kinase.